We begin with the raw amino-acid sequence, 345 residues long: MKETAAAKFERQHMDSPDLGTDDDDKMSPATSPFLATPRTAGIVGCPFSGGQPKAGVHSGPLQLIESGLLNDIENLGWTVDFAGADALAVSIVSDTPDPDIGRLKQPRLVSRVTKDVADRVYAHASKGQLTVTLGGDHSLAMGTVSGTFKAYPEACLIWVDAHADINTPHTTESGRLHGCPVSFLLGLDGTSSEEIPEFSWIKPCLKPERIVYIGLRDIDAGERKILKDNNIKCFSMFHVDKYGIGKVVEMALDHVNPDRTRPIHLSFDVDALDPSVAPSTGTAVRGGLTFREGHYICEAIAETNLLVSLDIMEINPSLGALASVAQTVDVGRSLVRCALGETLL.

A compositionally biased stretch (basic and acidic residues) spans 1 to 16; sequence MKETAAAKFERQHMDS. A disordered region spans residues 1-34; sequence MKETAAAKFERQHMDSPDLGTDDDDKMSPATSPF. Residues Ile101, His124, Ser126, Gly128, Ile232, and Cys234 each coordinate Mn(2+).

This sequence belongs to the arginase family. Homotrimer. Mn(2+) serves as cofactor.

The catalysed reaction is L-arginine + H2O = urea + L-ornithine. It functions in the pathway nitrogen metabolism; urea cycle; L-ornithine and urea from L-arginine: step 1/1. Its activity is regulated as follows. The enzyme activity is increased in the range of 20-50% upon the addition of Mn(2+) (1 mM), Co(2+) (1 mM), Ni(2+) (1 and 5 mM) and K(+) (5 mM). In contrast, the addition of Cu(2+), Zn(2+), Ca(2+), Mg(2+), Fe(2+) (both 1 and 5 mM), and Co(2+) (5 mM) strongly suppresses the arginase activity. SDS (1%) and EDTA (1 mM) are the most potent inhibitors. Reducing agents DTT (1 mM), PMSF (1 mM) and beta-mercaptoethanol (1 mM) also significantly inhibit activity by 85%, 64% and 35%, respectively. Surfactants Triton X-100 (1%), Tween-80 (1%) and Tween-20 (1%) are more tolerant, showing a slight decrease of arginase activity in the range of 10-30%. Cold-active L-arginase that catalyzes the hydrolysis of L-arginine to L-ornithine and urea, an essential reaction in the urea cycle for toxic ammonia removal and cell proliferation. Is not able to use D-arginine or L-canavanine as substrates. The chain is Arginase from Glaciozyma antarctica (strain PI12) (Antarctic psychrophilic yeast).